Reading from the N-terminus, the 68-residue chain is Conotoxin Pu5.5 (68 aa).

The N-terminal stretch at 1-22 (MRCVPVFIILLVLIASAPSVDA) is a signal peptide. Positions 23–49 (RPQTKDDALASFRDSIKRHLQTLLDAR) are excised as a propeptide.

Belongs to the conotoxin T superfamily. In terms of processing, contains 2 disulfide bonds that can be either 'C1-C3, C2-C4' or 'C1-C4, C2-C3', since these disulfide connectivities have been observed for conotoxins with cysteine framework V (for examples, see AC P0DQQ7 and AC P81755). In terms of tissue distribution, expressed by the venom duct.

The protein resides in the secreted. This Conus pulicarius (Flea-bitten cone) protein is Conotoxin Pu5.5.